Consider the following 633-residue polypeptide: MA3 DOMAIN-CONTAINING TRANSLATION REGULATORY FACTOR 4 (633 aa).

MI domains are found at residues 56-177 (DYKR…RAKK), 220-341 (ETKR…ERSD), 351-472 (RFKK…EISN), and 514-633 (DAKD…STDS). Residues 94–101 (VKRLVSMA) carry the Nuclear localization signal 1 motif. The short motif at 389–396 (LKKLITLA) is the Nuclear localization signal 2 element.

The protein belongs to the PDCD4 family. Binds to EIF4A1. The association with ribosomes is modulated by cellular energy status and TOR activity. Mostly expressed, at low levels, in rosette leaves and flower buds, and, to a lower extent, in roots, stems, cauline leaves and flowers.

It localises to the nucleus. The protein localises to the cytoplasm. The protein resides in the cytosol. Functionally, involved in target of rapamycin (TOR)-regulated translation control, especially under energy-deficient conditions. This chain is MA3 DOMAIN-CONTAINING TRANSLATION REGULATORY FACTOR 4, found in Arabidopsis thaliana (Mouse-ear cress).